We begin with the raw amino-acid sequence, 611 residues long: Pescadillo homolog (611 aa).

The segment at 310–335 (VQMGDPDEASPGEEEQFVAHASKSAP) is disordered. Acidic residues predominate over residues 314 to 325 (DPDEASPGEEEQ). The 102-residue stretch at 354 to 455 (PSSRLFAPYT…KILLEDTYAQ (102 aa)) folds into the BRCT domain. Disordered regions lie at residues 469–506 (YEGAYDPTAATNDADMDVETDGEEGEADASGDEKESNT) and 545–611 (VKKA…AGGK). Positions 482–498 (ADMDVETDGEEGEADAS) are enriched in acidic residues. Basic and acidic residues-rich tracts occupy residues 552 to 569 (KKPDTASKATEEAEKDMN) and 579 to 602 (KLYEKMKYSQQKKAAEKEKLEQRK). Residues 580–609 (LYEKMKYSQQKKAAEKEKLEQRKKQLQKAG) are a coiled coil.

The protein belongs to the pescadillo family. As to quaternary structure, component of the NOP7 complex, composed of ERB1, NOP7 and YTM1. The complex is held together by ERB1, which interacts with NOP7 via its N-terminal domain and with YTM1 via a high-affinity interaction between the seven-bladed beta-propeller domains of the 2 proteins. The NOP7 complex associates with the 66S pre-ribosome.

Its subcellular location is the nucleus. It is found in the nucleolus. It localises to the nucleoplasm. Component of the NOP7 complex, which is required for maturation of the 25S and 5.8S ribosomal RNAs and formation of the 60S ribosome. This chain is Pescadillo homolog, found in Coprinopsis cinerea (strain Okayama-7 / 130 / ATCC MYA-4618 / FGSC 9003) (Inky cap fungus).